A 547-amino-acid polypeptide reads, in one-letter code: Immunoglobulin epsilon heavy chain (547 aa).

Glutamine 1 bears the Pyrrolidone carboxylic acid mark. Ig-like domains lie at 1 to 120 (QVQL…TEVT), 130 to 223 (PSVF…KTFS), 232 to 329 (PTVK…KKCA), 333 to 437 (PRGV…TKTS), and 443 to 542 (PEVY…RAVS). Residues 1–124 (QVQLVQSGAE…EGTEVTYTVS (124 aa)) are variable (V) domain, involved in antigen recognition. Intrachain disulfides connect cysteine 22–cysteine 96, cysteine 139–cysteine 225, cysteine 153–cysteine 207, cysteine 254–cysteine 312, cysteine 358–cysteine 418, and cysteine 464–cysteine 524. The segment at 125-547 (GAWTLPSVFP…QRAVSVNPGK (423 aa)) is constant (C) domain. Asparagine 145, asparagine 173, asparagine 219, asparagine 265, asparagine 371, asparagine 383, and asparagine 394 each carry an N-linked (GlcNAc...) asparagine glycan.

In terms of assembly, immunoglobulins are composed of two identical heavy chains and two identical light chains; disulfide-linked.

It is found in the secreted. Its subcellular location is the cell membrane. In terms of biological role, immunoglobulins, also known as antibodies, are membrane-bound or secreted glycoproteins produced by B lymphocytes. In the recognition phase of humoral immunity, the membrane-bound immunoglobulins serve as receptors which, upon binding of a specific antigen, trigger the clonal expansion and differentiation of B lymphocytes into immunoglobulins-secreting plasma cells. Secreted immunoglobulins mediate the effector phase of humoral immunity, which results in the elimination of bound antigens. The antigen binding site is formed by the variable domain of one heavy chain, together with that of its associated light chain. Thus, each immunoglobulin has two antigen binding sites with remarkable affinity for a particular antigen. The variable domains are assembled by a process called V-(D)-J rearrangement and can then be subjected to somatic hypermutations which, after exposure to antigen and selection, allow affinity maturation for a particular antigen. This Homo sapiens (Human) protein is Immunoglobulin epsilon heavy chain.